A 115-amino-acid chain; its full sequence is Large ribosomal subunit protein bL19 (115 aa).

It belongs to the bacterial ribosomal protein bL19 family.

Its function is as follows. This protein is located at the 30S-50S ribosomal subunit interface and may play a role in the structure and function of the aminoacyl-tRNA binding site. The polypeptide is Large ribosomal subunit protein bL19 (Clostridium kluyveri (strain ATCC 8527 / DSM 555 / NBRC 12016 / NCIMB 10680 / K1)).